Here is an 82-residue protein sequence, read N- to C-terminus: RNA-binding protein Hfq (82 aa).

The 61-residue stretch at 11 to 71 (DTFLNHVRKT…ISTIMPGAPI (61 aa)) folds into the Sm domain.

The protein belongs to the Hfq family. As to quaternary structure, homohexamer.

Functionally, RNA chaperone that binds small regulatory RNA (sRNAs) and mRNAs to facilitate mRNA translational regulation in response to envelope stress, environmental stress and changes in metabolite concentrations. Also binds with high specificity to tRNAs. In Bradyrhizobium sp. (strain BTAi1 / ATCC BAA-1182), this protein is RNA-binding protein Hfq.